The sequence spans 418 residues: Nisin biosynthesis protein NisC (418 aa).

To B.subtilis SpaC and S.epidermidis EpiC.

Its function is as follows. Could be implicated in the processing or the export process of the nisin lantibiotic. The chain is Nisin biosynthesis protein NisC (nisC) from Lactococcus lactis subsp. lactis (Streptococcus lactis).